A 258-amino-acid polypeptide reads, in one-letter code: Pimeloyl-[acyl-carrier protein] methyl ester esterase (258 aa).

Residues W22, 84-85, and 145-149 contribute to the substrate site; these read SL and FLAIQ. Residue S84 is the Nucleophile of the active site. Active-site residues include D209 and H238. H238 contributes to the substrate binding site.

Belongs to the AB hydrolase superfamily. Carboxylesterase BioH family. As to quaternary structure, monomer.

It localises to the cytoplasm. It carries out the reaction 6-carboxyhexanoyl-[ACP] methyl ester + H2O = 6-carboxyhexanoyl-[ACP] + methanol + H(+). It functions in the pathway cofactor biosynthesis; biotin biosynthesis. In terms of biological role, the physiological role of BioH is to remove the methyl group introduced by BioC when the pimeloyl moiety is complete. It allows to synthesize pimeloyl-ACP via the fatty acid synthetic pathway through the hydrolysis of the ester bonds of pimeloyl-ACP esters. The protein is Pimeloyl-[acyl-carrier protein] methyl ester esterase of Pseudoalteromonas atlantica (strain T6c / ATCC BAA-1087).